The primary structure comprises 95 residues: Co-chaperonin GroES (95 aa).

This sequence belongs to the GroES chaperonin family. As to quaternary structure, heptamer of 7 subunits arranged in a ring. Interacts with the chaperonin GroEL.

The protein resides in the cytoplasm. In terms of biological role, together with the chaperonin GroEL, plays an essential role in assisting protein folding. The GroEL-GroES system forms a nano-cage that allows encapsulation of the non-native substrate proteins and provides a physical environment optimized to promote and accelerate protein folding. GroES binds to the apical surface of the GroEL ring, thereby capping the opening of the GroEL channel. This chain is Co-chaperonin GroES, found in Chlorobaculum tepidum (strain ATCC 49652 / DSM 12025 / NBRC 103806 / TLS) (Chlorobium tepidum).